Consider the following 475-residue polypeptide: Sulfate adenylyltransferase subunit 1 (475 aa).

Positions 25-239 constitute a tr-type G domain; it reads KSLLRFLTCG…EVLETVEIQR (215 aa). The tract at residues 34-41 is G1; it reads GSVDDGKS. GTP is bound at residue 34–41; sequence GSVDDGKS. The tract at residues 92–96 is G2; the sequence is GITID. Residues 113 to 116 form a G3 region; the sequence is DTPG. Residues 113–117 and 168–171 each bind GTP; these read DTPGH and NKMD. The tract at residues 168–171 is G4; that stretch reads NKMD. Positions 206–208 are G5; the sequence is SAL.

The protein belongs to the TRAFAC class translation factor GTPase superfamily. Classic translation factor GTPase family. CysN/NodQ subfamily. Heterodimer composed of CysD, the smaller subunit, and CysN.

It catalyses the reaction sulfate + ATP + H(+) = adenosine 5'-phosphosulfate + diphosphate. Its pathway is sulfur metabolism; hydrogen sulfide biosynthesis; sulfite from sulfate: step 1/3. In terms of biological role, with CysD forms the ATP sulfurylase (ATPS) that catalyzes the adenylation of sulfate producing adenosine 5'-phosphosulfate (APS) and diphosphate, the first enzymatic step in sulfur assimilation pathway. APS synthesis involves the formation of a high-energy phosphoric-sulfuric acid anhydride bond driven by GTP hydrolysis by CysN coupled to ATP hydrolysis by CysD. The sequence is that of Sulfate adenylyltransferase subunit 1 from Shigella dysenteriae serotype 1 (strain Sd197).